The chain runs to 338 residues: DNA-directed RNA polymerase subunit alpha (338 aa).

The tract at residues 1-233 (MLREEVAVST…DLFIPFLHAE (233 aa)) is alpha N-terminal domain (alpha-NTD). Positions 266 to 338 (IALKFIFIDQ…IDLPKNKFSN (73 aa)) are alpha C-terminal domain (alpha-CTD).

Belongs to the RNA polymerase alpha chain family. In plastids the minimal PEP RNA polymerase catalytic core is composed of four subunits: alpha, beta, beta', and beta''. When a (nuclear-encoded) sigma factor is associated with the core the holoenzyme is formed, which can initiate transcription.

It localises to the plastid. Its subcellular location is the chloroplast. The catalysed reaction is RNA(n) + a ribonucleoside 5'-triphosphate = RNA(n+1) + diphosphate. In terms of biological role, DNA-dependent RNA polymerase catalyzes the transcription of DNA into RNA using the four ribonucleoside triphosphates as substrates. This chain is DNA-directed RNA polymerase subunit alpha, found in Nandina domestica (Heavenly bamboo).